We begin with the raw amino-acid sequence, 339 residues long: Annexin A2 (339 aa).

Residue Ser2 is modified to N-acetylserine. Residues Ser2–Tyr24 are S100A10-binding site. At Tyr24 the chain carries Phosphotyrosine; by SRC. Thr26 carries the post-translational modification Phosphothreonine; by PKC. 4 Annexin repeats span residues Phe33–Lys104, Thr105–Lys176, Glu189–Gln261, and Asn265–Gly336.

This sequence belongs to the annexin family. In terms of assembly, heterotetramer containing 2 light chains of S100A10/p11 and 2 heavy chains of ANXA2/p36.

The protein localises to the secreted. The protein resides in the extracellular space. Its subcellular location is the extracellular matrix. It localises to the basement membrane. In terms of biological role, calcium-regulated membrane-binding protein whose affinity for calcium is greatly enhanced by anionic phospholipids. It binds two calcium ions with high affinity. The chain is Annexin A2 (ANXA2) from Gallus gallus (Chicken).